Here is a 491-residue protein sequence, read N- to C-terminus: MLIFEKSRKNRRTLAHAIADKMDANDIPANLLRHDAPRLPELSELEVVRHFTRLSTQNFSIDTHFYPLGSCTMKYNPRAANRLASLPGYLKRHPLSPAPQSQAFLQCLYELQTMLTEITGMEKISLTSMAGAQGEFAGVAMIKAYHESRGDYDRTEMIVPDAAHGTNPASAAMCGFTVKEISTTKDGDIDLEKLRQMVGAKTAGIMLTNPSTLGVFERQISEVAKIIHNAGGLLYYDGANLNAILGKYRPGDMGFDVMHLNLHKTFATPHGGGGPGAGPVAAGPRLSKFLPVPMVGKNKEGYDWLTEKECPKSIGRLSAFMGNSGVLLRAYIYLRLLGKEGLSRVAEFSTLNANYLMKRLEQLGFTLAFPNRRASHEFIITLKPLTRAYGVTALDIAKRLLDYGFHAPTIYFPLLVPECLLIEPTETESKQTLDHFIEAMEKILTEIKTTPDLLRNAPHQQLINRLDEVKAARELDLRWYPIAKETEIFIQ.

At K264 the chain carries N6-(pyridoxal phosphate)lysine.

Belongs to the GcvP family. C-terminal subunit subfamily. The glycine cleavage system is composed of four proteins: P, T, L and H. In this organism, the P 'protein' is a heterodimer of two subunits. Pyridoxal 5'-phosphate serves as cofactor.

The catalysed reaction is N(6)-[(R)-lipoyl]-L-lysyl-[glycine-cleavage complex H protein] + glycine + H(+) = N(6)-[(R)-S(8)-aminomethyldihydrolipoyl]-L-lysyl-[glycine-cleavage complex H protein] + CO2. The glycine cleavage system catalyzes the degradation of glycine. The P protein binds the alpha-amino group of glycine through its pyridoxal phosphate cofactor; CO(2) is released and the remaining methylamine moiety is then transferred to the lipoamide cofactor of the H protein. In Coxiella burnetii (strain CbuK_Q154) (Coxiella burnetii (strain Q154)), this protein is Probable glycine dehydrogenase (decarboxylating) subunit 2.